Consider the following 189-residue polypeptide: Peptidyl-tRNA hydrolase (189 aa).

Tyr15 contacts tRNA. His20 acts as the Proton acceptor in catalysis. Positions 66, 68, and 114 each coordinate tRNA.

Belongs to the PTH family. Monomer.

Its subcellular location is the cytoplasm. It carries out the reaction an N-acyl-L-alpha-aminoacyl-tRNA + H2O = an N-acyl-L-amino acid + a tRNA + H(+). Its function is as follows. Hydrolyzes ribosome-free peptidyl-tRNAs (with 1 or more amino acids incorporated), which drop off the ribosome during protein synthesis, or as a result of ribosome stalling. Catalyzes the release of premature peptidyl moieties from peptidyl-tRNA molecules trapped in stalled 50S ribosomal subunits, and thus maintains levels of free tRNAs and 50S ribosomes. The polypeptide is Peptidyl-tRNA hydrolase (Streptococcus pneumoniae (strain Taiwan19F-14)).